The primary structure comprises 167 residues: Photosystem I assembly protein Ycf3 (167 aa).

TPR repeat units follow at residues 35 to 68 (AFTY…EIDP), 72 to 105 (SYIL…NPSL), and 120 to 153 (GEQA…APGN).

It belongs to the Ycf3 family.

The protein resides in the plastid. Its subcellular location is the chloroplast thylakoid membrane. Essential for the assembly of the photosystem I (PSI) complex. May act as a chaperone-like factor to guide the assembly of the PSI subunits. The polypeptide is Photosystem I assembly protein Ycf3 (Chara vulgaris (Common stonewort)).